A 121-amino-acid polypeptide reads, in one-letter code: Heme-degrading monooxygenase (121 aa).

The ABM domain occupies 2-101; it reads IIVTNTIKVE…EQREDRKGIV (100 aa). Asn-6 contributes to the Fe cation binding site. Residues 76 to 98 are disordered; sequence KSDSFKKAHGRTKDTREQREDRK. Residues 78 to 98 show a composition bias toward basic and acidic residues; the sequence is DSFKKAHGRTKDTREQREDRK. A heme-binding site is contributed by His-84.

Belongs to the antibiotic biosynthesis monooxygenase family. Heme-degrading monooxygenase IsdG subfamily. In terms of assembly, homodimer.

The protein localises to the cytoplasm. The catalysed reaction is heme b + 3 reduced [NADPH--hemoprotein reductase] + 3 O2 = biliverdin IXalpha + CO + Fe(2+) + 3 oxidized [NADPH--hemoprotein reductase] + 3 H2O + H(+). Its function is as follows. Allows bacterial pathogens to use the host heme as an iron source. Catalyzes the oxidative degradation of the heme macrocyclic porphyrin ring to the biliverdin in the presence of a suitable electron donor such as ascorbate or NADPH--cytochrome P450 reductase, with subsequent release of free iron. In Listeria innocua serovar 6a (strain ATCC BAA-680 / CLIP 11262), this protein is Heme-degrading monooxygenase.